The following is a 116-amino-acid chain: Large ribosomal subunit protein bL19 (116 aa).

It belongs to the bacterial ribosomal protein bL19 family.

This protein is located at the 30S-50S ribosomal subunit interface and may play a role in the structure and function of the aminoacyl-tRNA binding site. This is Large ribosomal subunit protein bL19 from Pseudomonas aeruginosa (strain LESB58).